A 523-amino-acid chain; its full sequence is Nuclear receptor ROR-alpha (523 aa).

A compositionally biased stretch (low complexity) spans 1-26; that stretch reads MESAPAAPDPAASEPGSSGADAAAGS. The disordered stretch occupies residues 1-63; sequence MESAPAAPDP…SRGISVTKKT (63 aa). Lys-38 carries the N6-methyllysine modification. Positions 48-57 are enriched in polar residues; that stretch reads QSYSSTSRGI. NR C4-type zinc fingers lie at residues 73-93 and 109-133; these read CKIC…CEGC and CPRQ…LQKC. Positions 73–138 form a DNA-binding region, nuclear receptor; that stretch reads CKICGDKSSG…RLQKCLAVGM (66 aa). The tract at residues 154 to 183 is disordered; it reads DSLYAEVQKHRMQQQQRDHQQQPGEAEPLT. A Phosphothreonine; by MAPK1 modification is found at Thr-183. Lys-240 is covalently cross-linked (Glycyl lysine isopeptide (Lys-Gly) (interchain with G-Cter in SUMO)). One can recognise an NR LBD domain in the interval 272 to 510; it reads ELEHLAQNIS…LHFPPLYKEL (239 aa). Residues 506-523 carry the AF-2 motif; it reads LYKELFTSEFEPAMQIDG.

This sequence belongs to the nuclear hormone receptor family. NR1 subfamily. Monomer. Interacts (via the DNA-binding domain) with HIF1A; the interaction enhances HIF1A transcription under hypoxia through increasing protein stability. Interacts with CEBPB; the interaction disrupts the interaction CEBPB:EP300. Interacts with the coactivators NCOA2, PPARGC1A (via LXXLL motif), EP300 and MED1. Interacts with the corepressor NCOR1. Interacts with MAGED1 and CTNNB1. Interacts with CRY1 and PER2. Interacts (via AF-2 motif) with PROX1. Interacts with NRIP1. Isoform 4 interacts (via AF-2 motif) with isoform 1 of FOXP3 (via LXXLL motif). Phosphorylation by conventional PKCs in neurons inhibits transcriptional activity. Phosphorylated on Thr-183 by MAPK1/ERK1 in vitro. Post-translationally, sumoylated by SENP1 and SENP2. Sumoylation, promoted by PIAS2, PIAS3, PIAS4 but not PIAS1, enhances the transcriptional activity. Desumoylated by SENP1. In terms of processing, ubiquitinated, leading to its degradation by the proteasome. Proteasomal degradation is required for efficient transcriptional activity and is prevented by HR. Monomethylated at Lys-38 by EZH2, this creates a degron recognized by a DCX (DDB1-DCAF1/VPRBP-CUL4A-RBX1) E3 ubiquitin ligase complex. In terms of tissue distribution, widely expressed in a number of tissues. Expressed in both regulatory T-cells (Treg) and effector T-cells (Teff). Isoform 4: Highly expressed in the central nervous system, including in the cerebellum.

It localises to the nucleus. In terms of biological role, nuclear receptor that binds DNA as a monomer to ROR response elements (RORE) containing a single core motif half-site 5'-AGGTCA-3' preceded by a short A-T-rich sequence. Key regulator of embryonic development, cellular differentiation, immunity, circadian rhythm as well as lipid, steroid, xenobiotics and glucose metabolism. Considered to have intrinsic transcriptional activity, have some natural ligands like oxysterols that act as agonists (25-hydroxycholesterol) or inverse agonists (7-oxygenated sterols), enhancing or repressing the transcriptional activity, respectively. Recruits distinct combinations of cofactors to target genes regulatory regions to modulate their transcriptional expression, depending on the tissue, time and promoter contexts. Regulates genes involved in photoreceptor development including OPN1SW, OPN1SM and ARR3 and skeletal muscle development with MYOD1. Required for proper cerebellum development. Regulates SHH gene expression, among others, to induce granule cells proliferation as well as expression of genes involved in calcium-mediated signal transduction. Regulates the circadian expression of several clock genes, including CLOCK, BMAL1, NPAS2 and CRY1. Competes with NR1D1 for binding to their shared DNA response element on some clock genes such as BMAL1, CRY1 and NR1D1 itself, resulting in NR1D1-mediated repression or RORA-mediated activation of clock genes expression, leading to the circadian pattern of clock genes expression. Therefore influences the period length and stability of the clock. Regulates genes involved in lipid metabolism such as apolipoproteins APOA1, APOA5, APOC3 and PPARG. In liver, has specific and redundant functions with RORC as positive or negative modulator of expression of genes encoding phase I and phase II proteins involved in the metabolism of lipids, steroids and xenobiotics, such as CYP7B1 and SULT2A1. Induces a rhythmic expression of some of these genes. In addition, interplays functionally with NR1H2 and NR1H3 for the regulation of genes involved in cholesterol metabolism. Also involved in the regulation of hepatic glucose metabolism through the modulation of G6PC1 and PCK1. In adipose tissue, plays a role as negative regulator of adipocyte differentiation, probably acting through dual mechanisms. May suppress CEBPB-dependent adipogenesis through direct interaction and PPARG-dependent adipogenesis through competition for DNA-binding. Downstream of IL6 and TGFB and synergistically with RORC isoform 2, is implicated in the lineage specification of uncommitted CD4(+) T-helper (T(H)) cells into T(H)17 cells, antagonizing the T(H)1 program. Probably regulates IL17 and IL17F expression on T(H) by binding to the essential enhancer conserved non-coding sequence 2 (CNS2) in the IL17-IL17F locus. Involved in hypoxia signaling by interacting with and activating the transcriptional activity of HIF1A. May inhibit cell growth in response to cellular stress. May exert an anti-inflammatory role by inducing CHUK expression and inhibiting NF-kappa-B signaling. This is Nuclear receptor ROR-alpha (RORA) from Homo sapiens (Human).